Consider the following 400-residue polypeptide: 1-deoxy-D-xylulose 5-phosphate reductoisomerase (400 aa).

Positions 10, 11, 12, 13, 36, 38, and 124 each coordinate NADPH. Residue lysine 125 participates in 1-deoxy-D-xylulose 5-phosphate binding. NADPH is bound at residue glutamate 126. Residue aspartate 150 coordinates Mn(2+). Serine 151, glutamate 152, serine 186, and histidine 209 together coordinate 1-deoxy-D-xylulose 5-phosphate. Glutamate 152 provides a ligand contact to Mn(2+). Glycine 215 contacts NADPH. Residues serine 222, asparagine 227, lysine 228, and glutamate 231 each coordinate 1-deoxy-D-xylulose 5-phosphate. Glutamate 231 contacts Mn(2+).

This sequence belongs to the DXR family. Mg(2+) serves as cofactor. Requires Mn(2+) as cofactor.

The enzyme catalyses 2-C-methyl-D-erythritol 4-phosphate + NADP(+) = 1-deoxy-D-xylulose 5-phosphate + NADPH + H(+). The protein operates within isoprenoid biosynthesis; isopentenyl diphosphate biosynthesis via DXP pathway; isopentenyl diphosphate from 1-deoxy-D-xylulose 5-phosphate: step 1/6. Its function is as follows. Catalyzes the NADPH-dependent rearrangement and reduction of 1-deoxy-D-xylulose-5-phosphate (DXP) to 2-C-methyl-D-erythritol 4-phosphate (MEP). In Aliivibrio fischeri (strain MJ11) (Vibrio fischeri), this protein is 1-deoxy-D-xylulose 5-phosphate reductoisomerase.